The sequence spans 627 residues: Protein zyg-11 homolog A (627 aa).

LRR repeat units follow at residues L123–K146, L203–Q227, and I409–A432.

This sequence belongs to the zyg-11 family.

Its function is as follows. Probably acts as a target recruitment subunit in an E3 ubiquitin ligase complex ZYGA-CUL2-elongin BC. The protein is Protein zyg-11 homolog A (Zyg11a) of Mus musculus (Mouse).